A 316-amino-acid chain; its full sequence is N-acetylmuramic acid 6-phosphate etherase (316 aa).

The SIS domain maps to 68-231 (ITDRLRSGGR…STCAMVRLGK (164 aa)). E96 (proton donor) is an active-site residue. Residue E127 is part of the active site.

The protein belongs to the GCKR-like family. MurNAc-6-P etherase subfamily. In terms of assembly, homodimer.

The enzyme catalyses N-acetyl-D-muramate 6-phosphate + H2O = N-acetyl-D-glucosamine 6-phosphate + (R)-lactate. It participates in amino-sugar metabolism; N-acetylmuramate degradation. In terms of biological role, specifically catalyzes the cleavage of the D-lactyl ether substituent of MurNAc 6-phosphate, producing GlcNAc 6-phosphate and D-lactate. The protein is N-acetylmuramic acid 6-phosphate etherase of Prochlorococcus marinus (strain MIT 9313).